The primary structure comprises 118 residues: MSRVKRGVTARARHKKVLNQAKGYYGARSRVYRVAKQAVIKAGQYAYRDRKVKKRTFRSLWIVRINAAARQHDISYSQLINGLNKVGVELDRKALAELAVYNKDAFAAVVEKAKAALA.

Belongs to the bacterial ribosomal protein bL20 family.

In terms of biological role, binds directly to 23S ribosomal RNA and is necessary for the in vitro assembly process of the 50S ribosomal subunit. It is not involved in the protein synthesizing functions of that subunit. The chain is Large ribosomal subunit protein bL20 from Francisella tularensis subsp. tularensis (strain FSC 198).